The primary structure comprises 246 residues: 2-C-methyl-D-erythritol 4-phosphate cytidylyltransferase (246 aa).

Belongs to the IspD/TarI cytidylyltransferase family. IspD subfamily.

It carries out the reaction 2-C-methyl-D-erythritol 4-phosphate + CTP + H(+) = 4-CDP-2-C-methyl-D-erythritol + diphosphate. The protein operates within isoprenoid biosynthesis; isopentenyl diphosphate biosynthesis via DXP pathway; isopentenyl diphosphate from 1-deoxy-D-xylulose 5-phosphate: step 2/6. Catalyzes the formation of 4-diphosphocytidyl-2-C-methyl-D-erythritol from CTP and 2-C-methyl-D-erythritol 4-phosphate (MEP). The polypeptide is 2-C-methyl-D-erythritol 4-phosphate cytidylyltransferase (Clostridium tetani (strain Massachusetts / E88)).